Reading from the N-terminus, the 137-residue chain is Golgin subfamily A member 7 (137 aa).

2 S-palmitoyl cysteine lipidation sites follow: cysteine 69 and cysteine 72.

This sequence belongs to the ERF4 family. Interacts with GOLGA3. Interacts with ZDHHC9. In terms of processing, palmitoylated on Cys-69 and Cys-72; which is required for Golgi localization and interaction with GOLGA3.

Its subcellular location is the golgi apparatus membrane. In terms of biological role, may be involved in protein transport from Golgi to cell surface. The ZDHHC9-GOLGA7 complex is a palmitoyltransferase specific for HRAS and NRAS. This is Golgin subfamily A member 7 (GOLGA7) from Bos taurus (Bovine).